Consider the following 124-residue polypeptide: Large ribosomal subunit protein mL51 (124 aa).

A mitochondrion-targeting transit peptide spans 1–31 (MSVFGGLWRSAVNLCQSSRLFSTGSCARIRM).

This sequence belongs to the mitochondrion-specific ribosomal protein mL51 family. Component of the mitochondrial ribosome large subunit (39S) which comprises a 16S rRNA and about 50 distinct proteins.

The protein localises to the mitochondrion. This is Large ribosomal subunit protein mL51 (mrpl51) from Danio rerio (Zebrafish).